Reading from the N-terminus, the 197-residue chain is Holliday junction branch migration complex subunit RuvA (197 aa).

Positions 1-65 are domain I; sequence MISQVRGTIM…EDAWHLYGFA (65 aa). Residues 66 to 140 are domain II; it reads HAYERAVFQK…DKIDAVGPAP (75 aa). The flexible linker stretch occupies residues 140-144; that stretch reads PATGT. A domain III region spans residues 145 to 197; the sequence is APSPLGDDAVRALIALGYNQTEADRAVRAVVESGAPKDVSSLVRGALSRLTAK.

This sequence belongs to the RuvA family. In terms of assembly, homotetramer. Forms an RuvA(8)-RuvB(12)-Holliday junction (HJ) complex. HJ DNA is sandwiched between 2 RuvA tetramers; dsDNA enters through RuvA and exits via RuvB. An RuvB hexamer assembles on each DNA strand where it exits the tetramer. Each RuvB hexamer is contacted by two RuvA subunits (via domain III) on 2 adjacent RuvB subunits; this complex drives branch migration. In the full resolvosome a probable DNA-RuvA(4)-RuvB(12)-RuvC(2) complex forms which resolves the HJ.

It is found in the cytoplasm. Its function is as follows. The RuvA-RuvB-RuvC complex processes Holliday junction (HJ) DNA during genetic recombination and DNA repair, while the RuvA-RuvB complex plays an important role in the rescue of blocked DNA replication forks via replication fork reversal (RFR). RuvA specifically binds to HJ cruciform DNA, conferring on it an open structure. The RuvB hexamer acts as an ATP-dependent pump, pulling dsDNA into and through the RuvAB complex. HJ branch migration allows RuvC to scan DNA until it finds its consensus sequence, where it cleaves and resolves the cruciform DNA. The polypeptide is Holliday junction branch migration complex subunit RuvA (Gemmatimonas aurantiaca (strain DSM 14586 / JCM 11422 / NBRC 100505 / T-27)).